The chain runs to 118 residues: Large ribosomal subunit protein uL18 (118 aa).

The protein belongs to the universal ribosomal protein uL18 family. Part of the 50S ribosomal subunit; part of the 5S rRNA/L5/L18/L25 subcomplex. Contacts the 5S and 23S rRNAs.

This is one of the proteins that bind and probably mediate the attachment of the 5S RNA into the large ribosomal subunit, where it forms part of the central protuberance. The chain is Large ribosomal subunit protein uL18 from Levilactobacillus brevis (strain ATCC 367 / BCRC 12310 / CIP 105137 / JCM 1170 / LMG 11437 / NCIMB 947 / NCTC 947) (Lactobacillus brevis).